A 724-amino-acid chain; its full sequence is Catalase-peroxidase (724 aa).

The disordered stretch occupies residues 1-26 (MDENKTKPTGKCPVMHGGNTSTGSSN). The tryptophyl-tyrosyl-methioninium (Trp-Tyr) (with M-251) cross-link spans 98-225 (WHSAGSYRTT…LAAVQMGLIY (128 aa)). The active-site Proton acceptor is the His-99. The segment at residues 225–251 (YVNPEGVDGKSDPLRTAQDMRVTFSRM) is a cross-link (tryptophyl-tyrosyl-methioninium (Tyr-Met) (with W-98)). His-266 lines the heme b pocket.

This sequence belongs to the peroxidase family. Peroxidase/catalase subfamily. As to quaternary structure, homodimer or homotetramer. Requires heme b as cofactor. Post-translationally, formation of the three residue Trp-Tyr-Met cross-link is important for the catalase, but not the peroxidase activity of the enzyme.

It carries out the reaction H2O2 + AH2 = A + 2 H2O. The enzyme catalyses 2 H2O2 = O2 + 2 H2O. Its function is as follows. Bifunctional enzyme with both catalase and broad-spectrum peroxidase activity. This is Catalase-peroxidase from Pectobacterium atrosepticum (strain SCRI 1043 / ATCC BAA-672) (Erwinia carotovora subsp. atroseptica).